A 547-amino-acid polypeptide reads, in one-letter code: Chaperonin GroEL (547 aa).

ATP-binding positions include threonine 29–proline 32, aspartate 86–threonine 90, glycine 413, and aspartate 498.

The protein belongs to the chaperonin (HSP60) family. As to quaternary structure, forms a cylinder of 14 subunits composed of two heptameric rings stacked back-to-back. Interacts with the co-chaperonin GroES.

It is found in the cytoplasm. It catalyses the reaction ATP + H2O + a folded polypeptide = ADP + phosphate + an unfolded polypeptide.. Its function is as follows. Together with its co-chaperonin GroES, plays an essential role in assisting protein folding. The GroEL-GroES system forms a nano-cage that allows encapsulation of the non-native substrate proteins and provides a physical environment optimized to promote and accelerate protein folding. In Herpetosiphon aurantiacus (strain ATCC 23779 / DSM 785 / 114-95), this protein is Chaperonin GroEL.